A 931-amino-acid polypeptide reads, in one-letter code: Dual O-methyltransferase/FAD-dependent monooxygenase elcB (931 aa).

The O-methyltransferase stretch occupies residues 1-463 (MAASTGLSTV…TTDKARPNGD (463 aa)). D254 contributes to the S-adenosyl-L-methionine binding site. H304 (proton acceptor) is an active-site residue. A disordered region spans residues 455-474 (TDKARPNGDTTHSGQASIPN). Over residues 462–474 (GDTTHSGQASIPN) the composition is skewed to polar residues. The tract at residues 464–931 (TTHSGQASIP…TFEELDVAEL (468 aa)) is FAD-dependent monooxygenase. FAD is bound by residues E520, R604, D836, and A849.

This sequence in the C-terminal section; belongs to the paxM FAD-dependent monooxygenase family. It in the N-terminal section; belongs to the class I-like SAM-binding methyltransferase superfamily. Cation-independent O-methyltransferase family. COMT subfamily.

It catalyses the reaction nor-toralactone + S-adenosyl-L-methionine = toralactone + S-adenosyl-L-homocysteine + H(+). The enzyme catalyses toralactone + NADH + O2 + H(+) = 1-(3,4,5-trihydroxy-7-methoxynaphthalen-2-yl)propan-2-one + CO2 + NAD(+). It functions in the pathway secondary metabolite biosynthesis. Functionally, dual O-methyltransferase/FAD-dependent monooxygenase; part of the gene cluster that mediates the biosynthesis of elsinochrome C, a perelyenequinone phytotoxin structurally similar to cercosporin. The first step of elsinochrome C biosynthesis is performed by the polyketide synthase elcA which catalyzes the formation of nor-toralactone. The starter unit acyltransferase (SAT) domain of elcA initiates polyketide extension by the selective utilization of acetyl-CoA, which is elongated to the heptaketide in the beta-ketoacyl synthase (KS) domain by successive condensations with six malonyl units introduced by the malonyl acyltransferase (MAT) domain. The product template (PT) domain catalyzes C4-C9 and C2-C11 aldol cyclizations and dehydrations to a trihydroxynaphthalene, which is thought to be delivered to the thioesterase (TE) domain for product release. The bifunctional enzyme elcB then methylates nor-toralactone to toralactone before conducting an unusual oxidative aromatic ring opening. The next step in perylenequinone biosynthesis is an O-methylation at the nascent OH-6 of the elcB product performed by the O-methyltransferase elcD. The oxidative coupling of the two monomeric naphthol units in perylenequinone biosynthesis is catalyzed by the FAD-dependent monooxygenase elcE and the multicopper oxidase elcG. ElcG might catalyze the first intermolecular coupling in a regio- and stereo-selective manner via a phenol radical coupling mechanism and the elcE could forge the second C-C bond intramolecularly via a hydride transfer mechanism. The fasciclin domain-containing protein elcF might also play a role duting this step. The last piece of the puzzle in the biosynthesis of elsinochrome C is the additional annulation by enolate coupling to afford the dihydrobenzo(ghi)perylenequinone system, catalyzed by the FAD-dependent monooxygenase elcH. The protein is Dual O-methyltransferase/FAD-dependent monooxygenase elcB of Phaeosphaeria nodorum (strain SN15 / ATCC MYA-4574 / FGSC 10173) (Glume blotch fungus).